A 294-amino-acid polypeptide reads, in one-letter code: Thymidylate synthase (294 aa).

DUMP contacts are provided by residues Arg30 and 156-157 (RR). Cys176 acts as the Nucleophile in catalysis. DUMP is bound by residues 196 to 199 (RSGD), Asn207, and 237 to 239 (HVY). Asp199 contacts (6R)-5,10-methylene-5,6,7,8-tetrahydrofolate. Residue Ala293 participates in (6R)-5,10-methylene-5,6,7,8-tetrahydrofolate binding.

It belongs to the thymidylate synthase family. Homodimer.

It carries out the reaction dUMP + (6R)-5,10-methylene-5,6,7,8-tetrahydrofolate = 7,8-dihydrofolate + dTMP. Its pathway is pyrimidine metabolism; dTTP biosynthesis. The protein is Thymidylate synthase of Ascaris suum (Pig roundworm).